We begin with the raw amino-acid sequence, 193 residues long: MRLCDRDIEAWLDDGRLVITPRPPTERISGATVDVRLGNQFRVFRGHTAAFIDLSGPKDEVSAALERVMSDEINLPEGEAFFLHPGELALAVTLESVTLPDNLVGWLDGRSSLARLGLMVHVTAHRIDPGWQGRIVLEFYNSGKLPLALRPGMMIGALSFEPLSGPAARPYNRRQDAKYKDQQGAVASRIDKD.

DCTP contacts are provided by residues 110-115, D128, 136-138, Y171, K178, and Q182; these read RSSLAR and VLE. The active-site Proton donor/acceptor is the E138. A disordered region spans residues 169 to 193; that stretch reads RPYNRRQDAKYKDQQGAVASRIDKD.

Belongs to the dCTP deaminase family. Homotrimer.

The enzyme catalyses dCTP + H2O + H(+) = dUTP + NH4(+). The protein operates within pyrimidine metabolism; dUMP biosynthesis; dUMP from dCTP (dUTP route): step 1/2. In terms of biological role, catalyzes the deamination of dCTP to dUTP. The protein is dCTP deaminase of Pectobacterium atrosepticum (strain SCRI 1043 / ATCC BAA-672) (Erwinia carotovora subsp. atroseptica).